We begin with the raw amino-acid sequence, 491 residues long: Fatty acyl-CoA reductase 1 (491 aa).

This sequence belongs to the fatty acyl-CoA reductase family. In terms of tissue distribution, expressed in the endodermal cell layer surrounding the central vasculature in roots. Expressed in the hilum region of seeds. Expressed in lateral root tips, cotyledons, the shoot apex, young leaves, petals, stamen filaments, and receptacle of siliques.

It carries out the reaction a long-chain fatty acyl-CoA + 2 NADPH + 2 H(+) = a long-chain primary fatty alcohol + 2 NADP(+) + CoA. In terms of biological role, catalyzes the reduction of fatty acyl-CoA to fatty alcohols. Catalyzes specifically the formation of C18:0 and C22:0 fatty alcohols. Provides the fatty alcohols required for synthesis of suberin in roots, seed coat and wound-induced leaf tissue. Provides the fatty alcohols required for synthesis of alkyl hydroxycinnamates in root waxes. This is Fatty acyl-CoA reductase 1 from Arabidopsis thaliana (Mouse-ear cress).